A 249-amino-acid polypeptide reads, in one-letter code: Probable transglycosylase SceD 2 (249 aa).

The first 27 residues, 1-27 (MKKTVIASTLAVGLGVTGIAAGNSADA), serve as a signal peptide directing secretion. 2 stretches are compositionally biased toward low complexity: residues 80–95 (WSYGEGSGEGSNASSE) and 103–171 (QQTA…SSSS). The segment at 80–203 (WSYGEGSGEG…PSSGASGKFQ (124 aa)) is disordered. Composition is skewed to polar residues over residues 172 to 182 (GVNAHLQQIAQ) and 192 to 203 (TNPSSGASGKFQ).

This sequence belongs to the transglycosylase family. SceD subfamily.

It localises to the secreted. Is able to cleave peptidoglycan and affects clumping and separation of bacterial cells. The sequence is that of Probable transglycosylase SceD 2 (sceD2) from Staphylococcus saprophyticus subsp. saprophyticus (strain ATCC 15305 / DSM 20229 / NCIMB 8711 / NCTC 7292 / S-41).